A 162-amino-acid chain; its full sequence is Nucleotide-binding protein A2cp1_0112 (162 aa).

It belongs to the YajQ family.

In terms of biological role, nucleotide-binding protein. This chain is Nucleotide-binding protein A2cp1_0112, found in Anaeromyxobacter dehalogenans (strain 2CP-1 / ATCC BAA-258).